We begin with the raw amino-acid sequence, 344 residues long: Dihydroorotase (344 aa).

Positions 14 and 16 each coordinate Zn(2+). Substrate contacts are provided by residues 16–18 and N42; that span reads HLR. Residues K100, H137, and H175 each coordinate Zn(2+). The residue at position 100 (K100) is an N6-carboxylysine. Substrate is bound at residue H137. L220 is a binding site for substrate. D248 serves as a coordination point for Zn(2+). D248 is a catalytic residue. H252 and A264 together coordinate substrate.

This sequence belongs to the metallo-dependent hydrolases superfamily. DHOase family. Class II DHOase subfamily. Homodimer. Requires Zn(2+) as cofactor.

The enzyme catalyses (S)-dihydroorotate + H2O = N-carbamoyl-L-aspartate + H(+). Its pathway is pyrimidine metabolism; UMP biosynthesis via de novo pathway; (S)-dihydroorotate from bicarbonate: step 3/3. Its function is as follows. Catalyzes the reversible cyclization of carbamoyl aspartate to dihydroorotate. In Cupriavidus metallidurans (strain ATCC 43123 / DSM 2839 / NBRC 102507 / CH34) (Ralstonia metallidurans), this protein is Dihydroorotase.